The chain runs to 212 residues: Dephospho-CoA kinase (212 aa).

The DPCK domain maps to 3-204; sequence ILGLTGSIGM…GSRPAAPVGG (202 aa). Residue 11–16 participates in ATP binding; the sequence is GMGKST.

The protein belongs to the CoaE family.

The protein localises to the cytoplasm. It catalyses the reaction 3'-dephospho-CoA + ATP = ADP + CoA + H(+). The protein operates within cofactor biosynthesis; coenzyme A biosynthesis; CoA from (R)-pantothenate: step 5/5. In terms of biological role, catalyzes the phosphorylation of the 3'-hydroxyl group of dephosphocoenzyme A to form coenzyme A. The chain is Dephospho-CoA kinase from Paramagnetospirillum magneticum (strain ATCC 700264 / AMB-1) (Magnetospirillum magneticum).